The primary structure comprises 227 residues: ATP-dependent Clp protease proteolytic subunit 1 (227 aa).

The active-site Nucleophile is the S124. H149 is an active-site residue.

This sequence belongs to the peptidase S14 family. Fourteen ClpP subunits assemble into 2 heptameric rings which stack back to back to give a disk-like structure with a central cavity, resembling the structure of eukaryotic proteasomes.

Its subcellular location is the cytoplasm. It catalyses the reaction Hydrolysis of proteins to small peptides in the presence of ATP and magnesium. alpha-casein is the usual test substrate. In the absence of ATP, only oligopeptides shorter than five residues are hydrolyzed (such as succinyl-Leu-Tyr-|-NHMec, and Leu-Tyr-Leu-|-Tyr-Trp, in which cleavage of the -Tyr-|-Leu- and -Tyr-|-Trp bonds also occurs).. Its function is as follows. Cleaves peptides in various proteins in a process that requires ATP hydrolysis. Has a chymotrypsin-like activity. Plays a major role in the degradation of misfolded proteins. The sequence is that of ATP-dependent Clp protease proteolytic subunit 1 from Rhodopirellula baltica (strain DSM 10527 / NCIMB 13988 / SH1).